Reading from the N-terminus, the 255-residue chain is 4-hydroxy-tetrahydrodipicolinate reductase (255 aa).

NAD(+) is bound by residues 9–14 (GFKGKM), 89–91 (GTT), and 115–118 (APNF). The active-site Proton donor/acceptor is the His-145. His-146 contributes to the (S)-2,3,4,5-tetrahydrodipicolinate binding site. Residue Lys-149 is the Proton donor of the active site. Position 155-156 (155-156 (GT)) interacts with (S)-2,3,4,5-tetrahydrodipicolinate.

It belongs to the DapB family.

Its subcellular location is the cytoplasm. It catalyses the reaction (S)-2,3,4,5-tetrahydrodipicolinate + NAD(+) + H2O = (2S,4S)-4-hydroxy-2,3,4,5-tetrahydrodipicolinate + NADH + H(+). It carries out the reaction (S)-2,3,4,5-tetrahydrodipicolinate + NADP(+) + H2O = (2S,4S)-4-hydroxy-2,3,4,5-tetrahydrodipicolinate + NADPH + H(+). It participates in amino-acid biosynthesis; L-lysine biosynthesis via DAP pathway; (S)-tetrahydrodipicolinate from L-aspartate: step 4/4. In terms of biological role, catalyzes the conversion of 4-hydroxy-tetrahydrodipicolinate (HTPA) to tetrahydrodipicolinate. This chain is 4-hydroxy-tetrahydrodipicolinate reductase, found in Streptococcus suis (strain 98HAH33).